The following is a 222-amino-acid chain: Phosphoribosylformylglycinamidine synthase subunit PurQ (222 aa).

A Glutamine amidotransferase type-1 domain is found at 3–222 (AAVVVFPGSN…RALSGLLTDA (220 aa)). Catalysis depends on C86, which acts as the Nucleophile. Active-site residues include H194 and E196.

Part of the FGAM synthase complex composed of 1 PurL, 1 PurQ and 2 PurS subunits.

It is found in the cytoplasm. It catalyses the reaction N(2)-formyl-N(1)-(5-phospho-beta-D-ribosyl)glycinamide + L-glutamine + ATP + H2O = 2-formamido-N(1)-(5-O-phospho-beta-D-ribosyl)acetamidine + L-glutamate + ADP + phosphate + H(+). The enzyme catalyses L-glutamine + H2O = L-glutamate + NH4(+). Its pathway is purine metabolism; IMP biosynthesis via de novo pathway; 5-amino-1-(5-phospho-D-ribosyl)imidazole from N(2)-formyl-N(1)-(5-phospho-D-ribosyl)glycinamide: step 1/2. Its function is as follows. Part of the phosphoribosylformylglycinamidine synthase complex involved in the purines biosynthetic pathway. Catalyzes the ATP-dependent conversion of formylglycinamide ribonucleotide (FGAR) and glutamine to yield formylglycinamidine ribonucleotide (FGAM) and glutamate. The FGAM synthase complex is composed of three subunits. PurQ produces an ammonia molecule by converting glutamine to glutamate. PurL transfers the ammonia molecule to FGAR to form FGAM in an ATP-dependent manner. PurS interacts with PurQ and PurL and is thought to assist in the transfer of the ammonia molecule from PurQ to PurL. This is Phosphoribosylformylglycinamidine synthase subunit PurQ from Ruegeria sp. (strain TM1040) (Silicibacter sp.).